Consider the following 424-residue polypeptide: UDP-glycosyltransferase 76H1 (424 aa).

Residues S248, 306-307 (WA), 324-332 (HCGWNSTIE), and 346-349 (FADQ) each bind UDP-alpha-D-glucose.

It belongs to the UDP-glycosyltransferase family.

Its function is as follows. May glycosylate diterpenes or flavonols in leaves. The sequence is that of UDP-glycosyltransferase 76H1 from Stevia rebaudiana (Stevia).